A 487-amino-acid polypeptide reads, in one-letter code: Vacuolar protein sorting-associated protein 30 (487 aa).

Positions 33 to 129 (PQTLKKSSVP…DNPDAPMGSE (97 aa)) are disordered. Residues 52–62 (QSRKSIYDRVS) are compositionally biased toward basic and acidic residues. Residues 81-94 (SSMSFVLLSESQMA) show a composition bias toward polar residues. Residues 152–282 (VECTEMLVEG…DSQLLEKLQR (131 aa)) adopt a coiled-coil conformation. The interval 283-480 (SNVYNDTFCI…LAHASNVTSN (198 aa)) is BARA. Residues 456 to 481 (WTKACKLTLTCCKFLLAHASNVTSNA) are required for membrane-association, autophagic function during starvation and normal autophagosome morphology.

It belongs to the beclin family. In terms of assembly, component of the autophagy-specific VPS34 PI3-kinase complex I; and of the VPS34 PI3-kinase complex II.

The protein localises to the endosome membrane. It localises to the vacuole membrane. The protein resides in the preautophagosomal structure membrane. In terms of biological role, required for cytoplasm to vacuole transport (Cvt), autophagy, nucleophagy, and mitophagy, as a part of the autophagy-specific VPS34 PI3-kinase complex I. This complex is essential to recruit the ATG8-phosphatidylinositol conjugate and the ATG12-ATG5 conjugate to the pre-autophagosomal structure. Also involved in endosome-to-Golgi retrograde transport as part of the VPS34 PI3-kinase complex II. Autophagy is required for proper vegetative growth, asexual/sexual reproduction, and full virulence. Autophagy is particularly involved in the biosynthesis of deoxynivalenol (DON), an important virulence determinant. This Gibberella zeae (strain ATCC MYA-4620 / CBS 123657 / FGSC 9075 / NRRL 31084 / PH-1) (Wheat head blight fungus) protein is Vacuolar protein sorting-associated protein 30.